The sequence spans 371 residues: Cytochrome b (371 aa).

Transmembrane regions (helical) follow at residues 25–45 (FGSM…FLAV), 69–90 (WMMQ…YIHI), 105–125 (WLSG…GYVL), and 170–190 (FSAL…LHIM). Residues His-75 and His-89 each contribute to the heme b site. Residues His-174 and His-188 each contribute to the heme b site. A ubiquinone is bound at residue His-193. 4 consecutive transmembrane segments (helical) span residues 218 to 238 (YKDL…VSFL), 280 to 300 (LGGA…PFTH), 312 to 332 (IMQL…WSAT), and 339 to 358 (FTVI…IMNP).

This sequence belongs to the cytochrome b family. As to quaternary structure, the cytochrome bc1 complex contains 3 respiratory subunits (MT-CYB, CYC1 and UQCRFS1), 2 core proteins (UQCRC1 and UQCRC2) and probably 6 low-molecular weight proteins. It depends on heme b as a cofactor.

The protein localises to the mitochondrion inner membrane. Functionally, component of the ubiquinol-cytochrome c reductase complex (complex III or cytochrome b-c1 complex) that is part of the mitochondrial respiratory chain. The b-c1 complex mediates electron transfer from ubiquinol to cytochrome c. Contributes to the generation of a proton gradient across the mitochondrial membrane that is then used for ATP synthesis. This Eryx elegans (Central Asian sand boa) protein is Cytochrome b (MT-CYB).